The chain runs to 462 residues: MDNGMFSSFIMIKNLLLFCISMNLASHFGFSQMPTSSVKAETDDNITIFTRILDGLLDGYDNRLRPGLGERITQVRTDIYVTSFGPVSDTEMEYTIDVFFRQSWKDERLRFKGPMQRLPLNNLLASKIWTPDTFFHNGKKSIAHNMTTPNKLLRLEDDGTLLYTMRLTISAECPMQLEDFPMDAHACPLKFGSYAYPNSEVIYVWTNGTAKSVVVAEDGSRLNQYHLMGQTVGTENISTSTGEYTIMTAHFHLKRKIGYFVIQTYLPCIMTVILSQVSFWLNRESVPARTVFGVTTVLTMTTLSISARNSLPKVAYATAMDWFIAVCYAFVFSALIEFATVNYFTKRGWAWDGKKALEAAKIKKKERELTINKSTNAYTTGKMTHPPNIPKEQTPAGTTNASSASVKPEDKASENKKTYNSISKIDKMSRIIFPLLFGTFNLVYWATYLNREPVIKGATSPK.

An N-terminal signal peptide occupies residues 1–31 (MDNGMFSSFIMIKNLLLFCISMNLASHFGFS). Residues 32 to 260 (QMPTSSVKAE…FHLKRKIGYF (229 aa)) lie on the Extracellular side of the membrane. A glycan (N-linked (GlcNAc...) asparagine) is linked at Asn45. Residue Arg101 coordinates 4-aminobutanoate. Residue Asn145 is glycosylated (N-linked (GlcNAc...) asparagine). Residue Thr164 coordinates 4-aminobutanoate. A disulfide bridge links Cys173 with Cys187. Residues Asn207 and Asn236 are each glycosylated (N-linked (GlcNAc...) asparagine). The next 3 helical transmembrane spans lie at 261–281 (VIQTYLPCIMTVILSQVSFWL), 287–308 (PARTVFGVTTVLTMTTLSISAR), and 319–340 (AMDWFIAVCYAFVFSALIEFAT). The Cytoplasmic segment spans residues 341–427 (VNYFTKRGWA…TYNSISKIDK (87 aa)). Residue Lys355 forms a Glycyl lysine isopeptide (Lys-Gly) (interchain with G-Cter in ubiquitin) linkage. Residues 375–412 (TNAYTTGKMTHPPNIPKEQTPAGTTNASSASVKPEDKA) form a disordered region. Positions 395-405 (PAGTTNASSAS) are enriched in polar residues. Residues 428–448 (MSRIIFPLLFGTFNLVYWATY) traverse the membrane as a helical segment.

This sequence belongs to the ligand-gated ion channel (TC 1.A.9) family. Gamma-aminobutyric acid receptor (TC 1.A.9.5) subfamily. GABRA5 sub-subfamily. In terms of assembly, heteropentamer, formed by a combination of alpha (GABRA1-6), beta (GABRB1-3), gamma (GABRG1-3), delta (GABRD), epsilon (GABRE), rho (GABRR1-3), pi (GABRP) and theta (GABRQ) chains, each subunit exhibiting distinct physiological and pharmacological properties.

Its subcellular location is the postsynaptic cell membrane. The protein resides in the cell membrane. It catalyses the reaction chloride(in) = chloride(out). Alpha subunit of the heteropentameric ligand-gated chloride channel gated by gamma-aminobutyric acid (GABA), a major inhibitory neurotransmitter in the brain. GABA-gated chloride channels, also named GABA(A) receptors (GABAAR), consist of five subunits arranged around a central pore and contain GABA active binding site(s) located at the alpha and beta subunit interface(s). When activated by GABA, GABAARs selectively allow the flow of chloride anions across the cell membrane down their electrochemical gradient. GABAARs containing alpha-5/GABRA5 subunits are mainly extrasynaptic and contribute to the tonic GABAergic inhibition in the hippocampus. Extrasynaptic alpha-5-containing GABAARs in CA1 pyramidal neurons play a role in learning and memory processes. The polypeptide is Gamma-aminobutyric acid receptor subunit alpha-5 (GABRA5) (Bos taurus (Bovine)).